The primary structure comprises 878 residues: E3 ubiquitin-protein ligase BRE1-like 1 (878 aa).

Residues 1-21 (MASTGEPDRKRRHFSSISPSE) are disordered. Coiled-coil stretches lie at residues 48-76 (QNLK…IKEK), 200-261 (QLAL…ELQQ), 293-382 (SDRE…EKLQ), and 537-624 (LDMY…ILKS). The RING-type zinc finger occupies 826–865 (CKACNDRPKEVVITKCYHLFCNPCVQKLTGTRQKKCPTCS).

This sequence belongs to the BRE1 family. As to quaternary structure, may act as a tetramer consisting of two copies of HUB1 and two copies of HUB2. Interacts with MED21. In terms of tissue distribution, ubiquitously expressed.

It localises to the nucleus. The enzyme catalyses S-ubiquitinyl-[E2 ubiquitin-conjugating enzyme]-L-cysteine + [acceptor protein]-L-lysine = [E2 ubiquitin-conjugating enzyme]-L-cysteine + N(6)-ubiquitinyl-[acceptor protein]-L-lysine.. It functions in the pathway protein modification; protein ubiquitination. Its function is as follows. E3 ubiquitin-protein ligase that monoubiquitinates H2B to form H2BK143ub1. H2BK143ub1 gives a specific tag for epigenetic transcriptional activation and is also prerequisite for H3K4me and maybe H3K79me. It thereby plays a central role in histone code and gene regulation. Forms a ubiquitin ligase complex in cooperation with the E2 enzyme UBC2/RAD6. Required for the regulation of flowering time and defense against necrotrophic fungal pathogens. Involved in the control of seed dormancy and germination. This chain is E3 ubiquitin-protein ligase BRE1-like 1 (HUB1), found in Arabidopsis thaliana (Mouse-ear cress).